A 339-amino-acid polypeptide reads, in one-letter code: Immunoglobulin-binding protein 1 (339 aa).

Position 2 is an N-acetylalanine (alanine 2). A UIM domain is found at 46-60; the sequence is LDLLEKAAEMLSQLD. The interval 98–202 is interaction with PPP2CA; that stretch reads RLDHLQRARE…YLLHLQRWID (105 aa). Disordered stretches follow at residues 221–243 and 289–339; these read RDSSREASTSNSSRQERPPVKPF and APEE…QNMG. The segment at 225–290 is interaction with MID1; it reads REASTSNSSR…PDQGIAKAAP (66 aa). An N6-acetyllysine modification is found at lysine 241. Residues 301–312 are compositionally biased toward acidic residues; sequence EEQEEKEEEDDE. The segment covering 313 to 329 has biased composition (basic and acidic residues); it reads QTLHRAREWDDWKDTHP.

Belongs to the IGBP1/TAP42 family. In terms of assembly, interacts with partially folded PPP2CA, but not with the fully active protein. Interacts with PPP2CB, and with PP4 and PP6. Interacts with MID1 and MID2. Interacts with ubiquitin. Post-translationally, phosphorylated. In terms of processing, monoubiquitination by MID1 triggers calpain-mediated cleavage and switches IGBP1 activity from protective to destructive. Ubiquitously expressed with highest levels in heart, skeletal muscle and pancreas.

It localises to the cytoplasm. Associated to surface IgM-receptor; may be involved in signal transduction. Involved in regulation of the catalytic activity of the phosphatases PP2A, PP4 and PP6 by protecting their partially folded catalytic subunits from degradative polyubiquitination until they associate with regulatory subunits. This is Immunoglobulin-binding protein 1 (IGBP1) from Homo sapiens (Human).